The sequence spans 445 residues: DNA polymerase IV (445 aa).

Residues 49 to 229 enclose the UmuC domain; that stretch reads LAHVDCDAFY…KPVGMIWGVG (181 aa). Mg(2+)-binding residues include Asp53 and Asp146. Residue Glu147 is part of the active site.

It belongs to the DNA polymerase type-Y family. Monomer. The cofactor is Mg(2+).

It is found in the cytoplasm. The enzyme catalyses DNA(n) + a 2'-deoxyribonucleoside 5'-triphosphate = DNA(n+1) + diphosphate. Functionally, poorly processive, error-prone DNA polymerase involved in untargeted mutagenesis. Copies undamaged DNA at stalled replication forks, which arise in vivo from mismatched or misaligned primer ends. These misaligned primers can be extended by PolIV. Exhibits no 3'-5' exonuclease (proofreading) activity. May be involved in translesional synthesis, in conjunction with the beta clamp from PolIII. In Brucella melitensis biotype 1 (strain ATCC 23456 / CCUG 17765 / NCTC 10094 / 16M), this protein is DNA polymerase IV.